The chain runs to 140 residues: Putative membrane protein ORF7 (140 aa).

A helical transmembrane segment spans residues 44–60; it reads TCAVSFFALFMLIIWVL. Residues 66–118 form a disordered region; that stretch reads PEGSTTRGTDAHTQTEGSTTRGTDAHTQTEGSRDQGSMTPEADDLTRPPLGHG. Residues 68–103 show a composition bias toward polar residues; that stretch reads GSTTRGTDAHTQTEGSTTRGTDAHTQTEGSRDQGSM.

It localises to the membrane. In Ictalurid herpesvirus 1 (strain Auburn) (IcHV-1), this protein is Putative membrane protein ORF7 (ORF7).